Consider the following 86-residue polypeptide: Exopolysaccharide production repressor protein (86 aa).

A helical transmembrane segment spans residues 18 to 38 (FAVTLAASVFLQVVYFLSLLF). The disordered stretch occupies residues 44–86 (TRESDRSIHSGTRQADQPQKRDRDKTEQSNVPKLDPRRKRRTP). Basic and acidic residues predominate over residues 61-70 (PQKRDRDKTE).

It localises to the cell membrane. Its pathway is glycan metabolism; exopolysaccharide biosynthesis. In terms of biological role, inhibition of exopolysaccharide synthesis (EPS) and nodulation ability (NOD). The protein is Exopolysaccharide production repressor protein (exoX) of Rhizobium leguminosarum bv. phaseoli.